The sequence spans 436 residues: Acrosin (436 aa).

Positions 1–19 are cleaved as a signal peptide; it reads MVEMLPTVAVLVLAVSVVA. The N-linked (GlcNAc...) asparagine glycan is linked to Asn-22. Disulfide bonds link Cys-25–Cys-155, Cys-29–Cys-163, Cys-74–Cys-90, Cys-178–Cys-247, Cys-210–Cys-226, and Cys-237–Cys-267. Residues 43-291 form the Peptidase S1 domain; that stretch reads IVSGQSAQLG…YLDWIASKIG (249 aa). Residues His-89 and Asp-143 each act as charge relay system in the active site. Asn-211 is a glycosylation site (N-linked (GlcNAc...) asparagine). The Charge relay system role is filled by Ser-241. Positions 346–436 are cleaved as a propeptide — pro-rich; sequence PSSTQTSSSL…NKPSEPFLHS (91 aa).

This sequence belongs to the peptidase S1 family. Heavy chain (catalytic) and a light chain linked by two disulfide bonds. Forms a heterodimer with SERPINA5.

The enzyme catalyses Preferential cleavage: Arg-|-Xaa, Lys-|-Xaa.. With respect to regulation, inhibited by SERPINA5. Functionally, acrosin is the major protease of mammalian spermatozoa. It is a serine protease of trypsin-like cleavage specificity, it is synthesized in a zymogen form, proacrosin and stored in the acrosome. The protein is Acrosin (Acr) of Mus musculus (Mouse).